The primary structure comprises 161 residues: Cyclic pyranopterin monophosphate synthase (161 aa).

Residues 75 to 77 (MCH) and 115 to 116 (ME) each bind substrate. Asp130 is a catalytic residue.

This sequence belongs to the MoaC family. Homohexamer; trimer of dimers.

The enzyme catalyses (8S)-3',8-cyclo-7,8-dihydroguanosine 5'-triphosphate = cyclic pyranopterin phosphate + diphosphate. Its pathway is cofactor biosynthesis; molybdopterin biosynthesis. In terms of biological role, catalyzes the conversion of (8S)-3',8-cyclo-7,8-dihydroguanosine 5'-triphosphate to cyclic pyranopterin monophosphate (cPMP). The protein is Cyclic pyranopterin monophosphate synthase of Bacillus thuringiensis subsp. konkukian (strain 97-27).